The following is a 342-amino-acid chain: 4-hydroxy-2-oxovalerate aldolase (342 aa).

The region spanning 7-257 (VWITEVALRD…KTGIDLYKMM (251 aa)) is the Pyruvate carboxyltransferase domain. 15-16 (RD) is a substrate binding site. Asp-16 is a Mn(2+) binding site. His-19 (proton acceptor) is an active-site residue. Residues Ser-169 and His-196 each contribute to the substrate site. Mn(2+)-binding residues include His-196 and His-198. Tyr-287 contributes to the substrate binding site.

The protein belongs to the 4-hydroxy-2-oxovalerate aldolase family.

The catalysed reaction is (S)-4-hydroxy-2-oxopentanoate = acetaldehyde + pyruvate. The chain is 4-hydroxy-2-oxovalerate aldolase (pheE) from Geobacillus stearothermophilus (Bacillus stearothermophilus).